A 719-amino-acid polypeptide reads, in one-letter code: Phosphoribosylformylglycinamidine synthase subunit PurL (719 aa).

H47 is an active-site residue. Y50 and K89 together coordinate ATP. E91 provides a ligand contact to Mg(2+). Substrate contacts are provided by residues 92-95 (SHNH) and R114. H93 acts as the Proton acceptor in catalysis. Residue D115 coordinates Mg(2+). Position 238 (Q238) interacts with substrate. D266 lines the Mg(2+) pocket. 310–312 (ESQ) is a binding site for substrate. 2 residues coordinate ATP: D488 and G525. Mg(2+) is bound at residue N526. S528 is a substrate binding site.

It belongs to the FGAMS family. As to quaternary structure, monomer. Part of the FGAM synthase complex composed of 1 PurL, 1 PurQ and 2 PurS subunits.

Its subcellular location is the cytoplasm. The enzyme catalyses N(2)-formyl-N(1)-(5-phospho-beta-D-ribosyl)glycinamide + L-glutamine + ATP + H2O = 2-formamido-N(1)-(5-O-phospho-beta-D-ribosyl)acetamidine + L-glutamate + ADP + phosphate + H(+). The protein operates within purine metabolism; IMP biosynthesis via de novo pathway; 5-amino-1-(5-phospho-D-ribosyl)imidazole from N(2)-formyl-N(1)-(5-phospho-D-ribosyl)glycinamide: step 1/2. In terms of biological role, part of the phosphoribosylformylglycinamidine synthase complex involved in the purines biosynthetic pathway. Catalyzes the ATP-dependent conversion of formylglycinamide ribonucleotide (FGAR) and glutamine to yield formylglycinamidine ribonucleotide (FGAM) and glutamate. The FGAM synthase complex is composed of three subunits. PurQ produces an ammonia molecule by converting glutamine to glutamate. PurL transfers the ammonia molecule to FGAR to form FGAM in an ATP-dependent manner. PurS interacts with PurQ and PurL and is thought to assist in the transfer of the ammonia molecule from PurQ to PurL. This chain is Phosphoribosylformylglycinamidine synthase subunit PurL, found in Roseobacter denitrificans (strain ATCC 33942 / OCh 114) (Erythrobacter sp. (strain OCh 114)).